Consider the following 475-residue polypeptide: MSPKTETKAYVGFKAGVKDYKLTYYTPEYETKDTDILAAFRVTPQPGVPPEEAGAAVAAESSTGTWTSVWTDGLTSLDRYKGRCYDIEPVAGEENQYICYVAYPLDLFEEGSVTNMFTSIVGNVFGFKALRALRLEDLRIPPAYSKTFQGPPHGIQVERDKLNKYGRPLLGCTIKPKLGLSAKNYGRAVYECLRGGLDFTKDDENVNSQPFMRWRDRFLFCAEALFKAQTETGEIKGHYLNATAGTCEEMIKRAVFARELGVPIVMHDYLTGGFTANTSLAHYCRDNGLLLHIHRAMHAVIDRQKNHGMHFRVLAKALRMSGGDHVHSGTVVGKLEGERDITLGFVDLLRDDFIEKDRSRGIYFTQDWVSMPGVLPVASGGIHVWHMPALTEIFGDDSVLQFGGGTLGHPWGNAPGAVANRVALEACVQARNEGRDLAREGNEIIREAAKWSPELAAACEVWKEIKFEFAAMDTL.

Residues 1–2 (MS) constitute a propeptide that is removed on maturation. P3 carries the N-acetylproline modification. An N6,N6,N6-trimethyllysine modification is found at K14. Substrate is bound by residues N123 and T173. Residue K175 is the Proton acceptor of the active site. K177 contributes to the substrate binding site. Residues K201, D203, and E204 each contribute to the Mg(2+) site. Position 201 is an N6-carboxylysine (K201). The active-site Proton acceptor is the H294. Substrate-binding residues include R295, H327, and S379.

It belongs to the RuBisCO large chain family. Type I subfamily. Heterohexadecamer of 8 large chains and 8 small chains; disulfide-linked. The disulfide link is formed within the large subunit homodimers. Requires Mg(2+) as cofactor. Post-translationally, the disulfide bond which can form in the large chain dimeric partners within the hexadecamer appears to be associated with oxidative stress and protein turnover.

The protein resides in the plastid. The protein localises to the chloroplast. The catalysed reaction is 2 (2R)-3-phosphoglycerate + 2 H(+) = D-ribulose 1,5-bisphosphate + CO2 + H2O. It catalyses the reaction D-ribulose 1,5-bisphosphate + O2 = 2-phosphoglycolate + (2R)-3-phosphoglycerate + 2 H(+). RuBisCO catalyzes two reactions: the carboxylation of D-ribulose 1,5-bisphosphate, the primary event in carbon dioxide fixation, as well as the oxidative fragmentation of the pentose substrate in the photorespiration process. Both reactions occur simultaneously and in competition at the same active site. The sequence is that of Ribulose bisphosphate carboxylase large chain from Piper cenocladum (Ant piper).